We begin with the raw amino-acid sequence, 688 residues long: Probable transcription factor gsfR1 (688 aa).

Acidic residues predominate over residues 1–16 (MSDGPETAEGDTDDAV). Positions 1–95 (MSDGPETAEG…TPVSSRGSIA (95 aa)) are disordered. The span at 24-36 (RVASESSARSQPR) shows a compositional bias: polar residues. Basic and acidic residues predominate over residues 58 to 75 (EHSKEKNVSRRLPTEKTP).

The protein resides in the nucleus. Probable transcription factor that regulates expression of the gene cluster that mediates the biosynthesis of Griseofulvin, an important antifungal drug that has been in use for a long time for treating dermatophyte infections. The chain is Probable transcription factor gsfR1 from Penicillium aethiopicum.